Consider the following 153-residue polypeptide: Large ribosomal subunit protein uL22 (153 aa).

The segment at 128 to 153 is disordered; that stretch reads ADRRARRAAAKPAASASPAANEGVPA. The span at 137 to 147 shows a compositional bias: low complexity; that stretch reads AKPAASASPAA.

The protein belongs to the universal ribosomal protein uL22 family. In terms of assembly, part of the 50S ribosomal subunit.

Its function is as follows. This protein binds specifically to 23S rRNA; its binding is stimulated by other ribosomal proteins, e.g. L4, L17, and L20. It is important during the early stages of 50S assembly. It makes multiple contacts with different domains of the 23S rRNA in the assembled 50S subunit and ribosome. In terms of biological role, the globular domain of the protein is located near the polypeptide exit tunnel on the outside of the subunit, while an extended beta-hairpin is found that lines the wall of the exit tunnel in the center of the 70S ribosome. The chain is Large ribosomal subunit protein uL22 from Acidiphilium cryptum (strain JF-5).